The following is a 465-amino-acid chain: Serine carboxypeptidase-like 19 (465 aa).

Positions 1-23 (MRNLSFIVLFLLTLFFIHHLVDA) are cleaved as a signal peptide. 77–79 (TGG) is a substrate binding site. Intrachain disulfides connect Cys-82/Cys-353, Cys-246/Cys-260, and Cys-284/Cys-320. N-linked (GlcNAc...) asparagine glycosylation is present at Asn-103. 177 to 179 (DSY) provides a ligand contact to substrate. Ser-178 is an active-site residue. Residues 292-317 (DTPNIRTDRRRVMKEFSVNDSSSLPP) constitute a propeptide, linker peptide. N-linked (GlcNAc...) asparagine glycosylation is found at Asn-310 and Asn-373. Residue Asp-389 is part of the active site. Asn-405 carries an N-linked (GlcNAc...) asparagine glycan. Position 439–443 (439–443 (KGGGH)) interacts with substrate. Residue His-443 is part of the active site.

The protein belongs to the peptidase S10 family. Heterodimer. In terms of processing, N-glycosylated. As to expression, expressed in roots and flowers, and at lower levels in young leaves and seedlings. Expressed in mature seeds and detected in expanding siliques.

The protein localises to the secreted. It catalyses the reaction 1-O-(trans-sinapoyl)-beta-D-glucose + choline = O-sinapoylcholine + D-glucose. Its activity is regulated as follows. Slightly inhibited by phenylmethylsulfonyl fluoride (PMSF). Involved in plants secondary metabolism. Functions as acyltransferase to form the sinapate ester sinapoylcholine also known as sinapine. Able to convert in vitro benzoylglucose into benzoylcholine. This chain is Serine carboxypeptidase-like 19, found in Arabidopsis thaliana (Mouse-ear cress).